We begin with the raw amino-acid sequence, 235 residues long: MIYVSSDSFFVFWRPGSNQNILTFYRAMKLWSTWITLLILTFFCSECNAKRGGRGGGGSSAMGKHYSRSKSYFTRKYSKPGSIEHTSSFRSFVFGATSGLLMFNAGRHIIQDSSEPISFGNRKYFWGESKYVPDEELPVQCINKIDPQDPQFGKVFFDNESRPQEIVYACPADNNCCGYDCCSNSTIFTSIFSLLVILLIVSVLSIFVIECVRWCLHCTYFCKHGHGRDFEPLSI.

A helical membrane pass occupies residues 27–47; it reads AMKLWSTWITLLILTFFCSEC. One can recognise a CX domain in the interval 124-185; sequence YFWGESKYVP…CCGYDCCSNS (62 aa). The chain crosses the membrane as a helical span at residues 187–207; it reads IFTSIFSLLVILLIVSVLSIF.

It is found in the membrane. This is an uncharacterized protein from Caenorhabditis elegans.